A 587-amino-acid chain; its full sequence is MMGSENADGFEETNLNAQRDDMENLDLGVDGGDHPLKISDVNGDTSNSGYRSAMSTLSNVRDPLSPPPTVMIPADSDPLLAPSSYEDFRSSFSSKPISSDNSYIEPPSYADVIFSPFDENSDSEINGTEDNSLHSQFSDSLSRSPSSSSSDYIKITVSNPQKEQEISNSIVGGNTYITYQITTRTNLPDFGGPSEFSVRRRFRDVVTLADRLAETYRGFCIPPRPDKSVVESQVMQKQEFVEQRRVALEKYLRRLSAHPVIRNSDELKVFLQVQGKLPLPMSTDVASRMLDGAVKLPKQLFGEGGASAVPVTEVGQPARGGRDLLRLFKELRQSVSNDWGGSKPPVVEEDKEFLEKKEKMHDLEQQIINASQQAESLVKAQQDMGETMGELGLAFIKLTKFENEEAVCNPQRTRANDMKNLATAAVKASRFYRELNSQTVKHLDTLHEYLGMMMAVQGAFADRSSALLTVQTLLSELPSLQTRVEKLEAASSKVFGGDKSRIRKIEELKETIKVTEDAKNVAIKGYERIKENNRSEVERLDRERRADFMNMMKGFVVNQVGYAEKMGNVWAKVAEETSQYDREKQSS.

Disordered stretches follow at residues 1–78 (MMGS…DSDP) and 115–151 (SPFD…SSSD). Composition is skewed to polar residues over residues 42-59 (NGDT…TLSN) and 123-134 (SEINGTEDNSLH). Residues 135-150 (SQFSDSLSRSPSSSSS) show a composition bias toward low complexity. Ser144 is modified (phosphoserine). A PX domain is found at 157–277 (VSNPQKEQEI…KVFLQVQGKL (121 aa)). Residues Arg201, Lys227, and Arg244 each contribute to the a 1,2-diacyl-sn-glycero-3-phospho-(1D-myo-inositol-3-phosphate) site. The BAR domain occupies 331–586 (LRQSVSNDWG…TSQYDREKQS (256 aa)).

This sequence belongs to the sorting nexin family. As to quaternary structure, homodimer. Heterodimer with SNX1 or SNX2A. Component of the retromer complex which consists of VPS29 (MAG1), VPS26 (VPS26A or VPS26B), VPS35 (VPS35A or VPS35B or VPS35C), VPS5/17 (SNX1 or SNX2A or SNX2B). As to expression, ubiquitously expressed but at a lower level in flowers, siliques, and senescing leaves.

The protein localises to the cytoplasm. The protein resides in the endosome membrane. It localises to the prevacuolar compartment membrane. Its subcellular location is the golgi apparatus. It is found in the trans-Golgi network membrane. Its function is as follows. Plays a role in vesicular protein sorting. Acts at the crossroads between the secretory and endocytic pathways. Is involved in the endosome to vacuole protein transport and, as component of the membrane-associated retromer complex, is also involved in endosome-to-Golgi retrograde transport. Also involved in the efficient sorting of seed storage protein globulin 12S. The protein is Sorting nexin 2A (SNX2A) of Arabidopsis thaliana (Mouse-ear cress).